The sequence spans 420 residues: Nucleobindin-2 (420 aa).

The first 24 residues, 1–24 (MRWRTIQARYCFLLVPCVLTALEA), serve as a signal peptide directing secretion. The DNA-binding element occupies 171–223 (RTRHEEFKKYEMMKEHERREYLKTLSEEKRKEEEAKFAEMKRKHEDHPKVNHP). Residues 194–225 (TLSEEKRKEEEAKFAEMKRKHEDHPKVNHPGS) form a disordered region. The segment at 213-420 (KHEDHPKVNH…AGELKFEPHT (208 aa)) is binds to necdin. EF-hand domains are found at residues 241 to 276 (PNDF…ELDK) and 293 to 328 (ERLR…KEFL). 8 residues coordinate Ca(2+): D254, N256, D258, E265, D306, N308, D310, and E317. A GBA motif is present at residues 304 to 334 (EIDNNKDRLVTLEEFLRATEKKEFLEPDSWE). S332 carries the post-translational modification Phosphoserine. The span at 366–386 (DELQKQKEELQRQHDHLEAQK) shows a compositional bias: basic and acidic residues. Residues 366–420 (DELQKQKEELQRQHDHLEAQKQEYQQAVQQLEQKKFQQGIAPSGPAGELKFEPHT) are disordered. Residues 387 to 396 (QEYQQAVQQL) show a composition bias toward low complexity.

Belongs to the nucleobindin family. As to quaternary structure, interacts (via GBA motif) with guanine nucleotide-binding protein G(i) alpha subunit GNAI3. Preferentially interacts with inactive rather than active GNAI3. Interaction with GNAI3 is inhibited when NUCB2 binds calcium, probably due to a conformational change which renders the GBA motif inaccessible. Binds to the postmitotic growth suppressor NDN; coexpression abolishes NUCB2 secretion. Interacts with MC4R.

It is found in the golgi apparatus. It localises to the endoplasmic reticulum. The protein localises to the nucleus envelope. Its subcellular location is the membrane. The protein resides in the cytoplasm. It is found in the secreted. Its function is as follows. Calcium-binding protein which may have a role in calcium homeostasis. Acts as a non-receptor guanine nucleotide exchange factor which binds to and activates guanine nucleotide-binding protein (G-protein) alpha subunit GNAI3. Functionally, anorexigenic peptide, seems to play an important role in hypothalamic pathways regulating food intake and energy homeostasis, acting in a leptin-independent manner. May also exert hypertensive roles and modulate blood pressure through directly acting on peripheral arterial resistance. In intestinal epithelial cells, plays a role in the inhibition of hepatic glucose production via MC4R receptor leading to increased cyclic adenosine monophosphate (cAMP) levels and glucagon-like peptide 1 (GLP-1) secretion. This is Nucleobindin-2 (Nucb2) from Rattus norvegicus (Rat).